Reading from the N-terminus, the 351-residue chain is 1-aminocyclopropane-1-carboxylate oxidase homolog 4 (351 aa).

One can recognise a Fe2OG dioxygenase domain in the interval 200–304; it reads KSQYMVGQHY…AIVFSTFMRA (105 aa). The Fe cation site is built by H224, D226, and H280. Residue R291 coordinates 2-oxoglutarate.

The protein belongs to the iron/ascorbate-dependent oxidoreductase family. It depends on Fe(2+) as a cofactor.

In Arabidopsis thaliana (Mouse-ear cress), this protein is 1-aminocyclopropane-1-carboxylate oxidase homolog 4.